Here is a 263-residue protein sequence, read N- to C-terminus: Endonuclease 8 (263 aa).

Catalysis depends on proline 2, which acts as the Schiff-base intermediate with DNA. Glutamate 3 (proton donor) is an active-site residue. Lysine 53 acts as the Proton donor; for beta-elimination activity in catalysis. Glutamine 70, arginine 125, and asparagine 169 together coordinate DNA. The segment at 229 to 263 (KVFHRDGEACERCGGIIEKTTLSSRPFYWCPHCQK) adopts an FPG-type zinc-finger fold. The active-site Proton donor; for delta-elimination activity is arginine 253.

This sequence belongs to the FPG family. The cofactor is Zn(2+).

It catalyses the reaction 2'-deoxyribonucleotide-(2'-deoxyribose 5'-phosphate)-2'-deoxyribonucleotide-DNA = a 3'-end 2'-deoxyribonucleotide-(2,3-dehydro-2,3-deoxyribose 5'-phosphate)-DNA + a 5'-end 5'-phospho-2'-deoxyribonucleoside-DNA + H(+). In terms of biological role, involved in base excision repair of DNA damaged by oxidation or by mutagenic agents. Acts as a DNA glycosylase that recognizes and removes damaged bases. Has a preference for oxidized pyrimidines, such as thymine glycol, 5,6-dihydrouracil and 5,6-dihydrothymine. Has AP (apurinic/apyrimidinic) lyase activity and introduces nicks in the DNA strand. Cleaves the DNA backbone by beta-delta elimination to generate a single-strand break at the site of the removed base with both 3'- and 5'-phosphates. This chain is Endonuclease 8, found in Salmonella arizonae (strain ATCC BAA-731 / CDC346-86 / RSK2980).